The chain runs to 239 residues: IkB-like protein (239 aa).

ANK repeat units lie at residues 48–80 (SKIT…EIIS), 87–118 (DGNS…GIKV), 124–153 (NGIT…NPNQ), and 158–187 (KGFN…KPLF). The Nuclear localization signal signature appears at 81 to 87 (HYRRDKD). The short motif at 203-214 (KKKPKIIITSCE) is the Nuclear localization signal element. Positions 206-213 (PKIIITSC) match the PxIxITxC motif; Interaction with host PPP3CA motif. An FLCV motif motif is present at residues 228-231 (FLCV).

Belongs to the asfivirus A238L family. In terms of assembly, interacts with host PPIA. Interacts with host PPP3CA/Calcineurin. Interacts with host RELA/p65; interaction of the 32 kDa form with host RELA results in the formation of a stable complex with NF-kappa-B. Interacts with host PPP3R1. Interacts with host EP300; this interaction inhibits the association of host EP300 with host RELA, JUN and NFATC2. Post-translationally, the protein exists in a 28 kDa and a 32 kDa form, probably due to post-translational modifications which are neither phosphorylation, nor sumoylation.

The protein localises to the host nucleus. It localises to the host cytoplasm. Functionally, ikB-like protein that inhibits the binding of NF-kappa-B to DNA, thereby downregulating pro-inflammatory cytokine production. Forms a heterodimer with the NF-kappa-B subunit RELA/p65 and prevents the activation of the NF-kappa-B transcription factor. Inhibits calcineurin function, which is required for the induction of nuclear factor of activated T cells (NFAT)-dependent immune response genes. Prevents the binding of substrates to calcineurin without affecting the phosphatase activity. Does not contain the serine residues that are phosphorylated by host IkB kinase and thus is not degraded following stimulation of the NFkB pathway. In Ornithodoros (relapsing fever ticks), this protein is IkB-like protein (A238L).